A 497-amino-acid chain; its full sequence is Probable cytosol aminopeptidase (497 aa).

Residues Lys-267 and Asp-272 each contribute to the Mn(2+) site. The active site involves Lys-279. Mn(2+) is bound by residues Asp-290, Asp-349, and Glu-351. Arg-353 is a catalytic residue.

The protein belongs to the peptidase M17 family. The cofactor is Mn(2+).

It localises to the cytoplasm. It carries out the reaction Release of an N-terminal amino acid, Xaa-|-Yaa-, in which Xaa is preferably Leu, but may be other amino acids including Pro although not Arg or Lys, and Yaa may be Pro. Amino acid amides and methyl esters are also readily hydrolyzed, but rates on arylamides are exceedingly low.. It catalyses the reaction Release of an N-terminal amino acid, preferentially leucine, but not glutamic or aspartic acids.. Functionally, presumably involved in the processing and regular turnover of intracellular proteins. Catalyzes the removal of unsubstituted N-terminal amino acids from various peptides. In Pseudomonas putida (strain W619), this protein is Probable cytosol aminopeptidase.